Consider the following 391-residue polypeptide: 3-ketoacyl-CoA thiolase (391 aa).

The active-site Acyl-thioester intermediate is the cysteine 95. Catalysis depends on proton acceptor residues histidine 347 and cysteine 377.

Belongs to the thiolase-like superfamily. Thiolase family. As to quaternary structure, heterotetramer of two alpha chains (FadB) and two beta chains (FadA).

The protein localises to the cytoplasm. The catalysed reaction is an acyl-CoA + acetyl-CoA = a 3-oxoacyl-CoA + CoA. It participates in lipid metabolism; fatty acid beta-oxidation. Functionally, catalyzes the final step of fatty acid oxidation in which acetyl-CoA is released and the CoA ester of a fatty acid two carbons shorter is formed. In Vibrio parahaemolyticus serotype O3:K6 (strain RIMD 2210633), this protein is 3-ketoacyl-CoA thiolase.